A 538-amino-acid chain; its full sequence is Carotenoid 9,10(9',10')-cleavage dioxygenase 1 (538 aa).

Fe cation is bound by residues His222, His270, His336, and His523.

This sequence belongs to the carotenoid oxygenase family. Homodimer. Fe(2+) is required as a cofactor. High expression in flowers and siliques. Also detected in stems, leaves and roots.

It localises to the cytoplasm. The catalysed reaction is all-trans-zeaxanthin + 2 O2 = 4,9-dimethyldodeca-2,4,6,8,10-pentaenedial + 2 (3R)-hydroxy-beta-ionone. Its function is as follows. Cleaves a variety of carotenoids symmetrically at both the 9-10 and 9'-10' double bonds. Active on beta,beta-carotene, lutein, zeaxanthin, all-trans-violaxanthin, 9-cis-violaxanthin and 9'-cis-neoxanthin. With most substrates, the carotenoid is symmetrically cleaved. Probably not involved in abscisic acid biosynthesis. In Arabidopsis thaliana (Mouse-ear cress), this protein is Carotenoid 9,10(9',10')-cleavage dioxygenase 1 (CCD1).